The sequence spans 79 residues: Small ribosomal subunit protein bS18c (79 aa).

This sequence belongs to the bacterial ribosomal protein bS18 family. Part of the 30S ribosomal subunit.

It is found in the plastid. Its subcellular location is the chloroplast. This chain is Small ribosomal subunit protein bS18c, found in Chaetosphaeridium globosum (Charophycean green alga).